Consider the following 800-residue polypeptide: Phenylalanine--tRNA ligase beta subunit (800 aa).

The tRNA-binding domain maps to 39 to 147; it reads FDAIADIVVG…QDSVPGVRLV (109 aa). Residues 401–477 form the B5 domain; it reads WQAAQLRFRP…RVYGMDNIPP (77 aa). 4 residues coordinate Mg(2+): aspartate 455, aspartate 461, glutamate 464, and glutamate 465. Positions 706–800 constitute an FDX-ACB domain; it reads PVFPPVKRDI…SLTEALGVRI (95 aa).

Belongs to the phenylalanyl-tRNA synthetase beta subunit family. Type 1 subfamily. Tetramer of two alpha and two beta subunits. It depends on Mg(2+) as a cofactor.

It is found in the cytoplasm. The enzyme catalyses tRNA(Phe) + L-phenylalanine + ATP = L-phenylalanyl-tRNA(Phe) + AMP + diphosphate + H(+). The chain is Phenylalanine--tRNA ligase beta subunit from Oleidesulfovibrio alaskensis (strain ATCC BAA-1058 / DSM 17464 / G20) (Desulfovibrio alaskensis).